Reading from the N-terminus, the 316-residue chain is 4-hydroxy-3-methylbut-2-enyl diphosphate reductase (316 aa).

Residue Cys12 participates in [4Fe-4S] cluster binding. 2 residues coordinate (2E)-4-hydroxy-3-methylbut-2-enyl diphosphate: His43 and His81. Dimethylallyl diphosphate contacts are provided by His43 and His81. Isopentenyl diphosphate is bound by residues His43 and His81. A [4Fe-4S] cluster-binding site is contributed by Cys103. His131 is a binding site for (2E)-4-hydroxy-3-methylbut-2-enyl diphosphate. His131 contacts dimethylallyl diphosphate. His131 is an isopentenyl diphosphate binding site. Glu133 (proton donor) is an active-site residue. Thr170 is a binding site for (2E)-4-hydroxy-3-methylbut-2-enyl diphosphate. Cys198 lines the [4Fe-4S] cluster pocket. (2E)-4-hydroxy-3-methylbut-2-enyl diphosphate is bound by residues Ser226, Asn228, and Ser271. Residues Ser226, Asn228, and Ser271 each coordinate dimethylallyl diphosphate. Residues Ser226, Asn228, and Ser271 each contribute to the isopentenyl diphosphate site.

It belongs to the IspH family. The cofactor is [4Fe-4S] cluster.

It carries out the reaction isopentenyl diphosphate + 2 oxidized [2Fe-2S]-[ferredoxin] + H2O = (2E)-4-hydroxy-3-methylbut-2-enyl diphosphate + 2 reduced [2Fe-2S]-[ferredoxin] + 2 H(+). The catalysed reaction is dimethylallyl diphosphate + 2 oxidized [2Fe-2S]-[ferredoxin] + H2O = (2E)-4-hydroxy-3-methylbut-2-enyl diphosphate + 2 reduced [2Fe-2S]-[ferredoxin] + 2 H(+). The protein operates within isoprenoid biosynthesis; dimethylallyl diphosphate biosynthesis; dimethylallyl diphosphate from (2E)-4-hydroxy-3-methylbutenyl diphosphate: step 1/1. It functions in the pathway isoprenoid biosynthesis; isopentenyl diphosphate biosynthesis via DXP pathway; isopentenyl diphosphate from 1-deoxy-D-xylulose 5-phosphate: step 6/6. In terms of biological role, catalyzes the conversion of 1-hydroxy-2-methyl-2-(E)-butenyl 4-diphosphate (HMBPP) into a mixture of isopentenyl diphosphate (IPP) and dimethylallyl diphosphate (DMAPP). Acts in the terminal step of the DOXP/MEP pathway for isoprenoid precursor biosynthesis. The polypeptide is 4-hydroxy-3-methylbut-2-enyl diphosphate reductase (Bacillus thuringiensis (strain Al Hakam)).